Here is a 427-residue protein sequence, read N- to C-terminus: Serine hydroxymethyltransferase (427 aa).

(6S)-5,6,7,8-tetrahydrofolate is bound by residues L122 and 126 to 128 (GHL). K231 is subject to N6-(pyridoxal phosphate)lysine. (6S)-5,6,7,8-tetrahydrofolate is bound by residues E247 and 355 to 357 (SPF).

The protein belongs to the SHMT family. Homodimer. Requires pyridoxal 5'-phosphate as cofactor.

The protein localises to the cytoplasm. The catalysed reaction is (6R)-5,10-methylene-5,6,7,8-tetrahydrofolate + glycine + H2O = (6S)-5,6,7,8-tetrahydrofolate + L-serine. Its pathway is one-carbon metabolism; tetrahydrofolate interconversion. The protein operates within amino-acid biosynthesis; glycine biosynthesis; glycine from L-serine: step 1/1. Its function is as follows. Catalyzes the reversible interconversion of serine and glycine with tetrahydrofolate (THF) serving as the one-carbon carrier. This reaction serves as the major source of one-carbon groups required for the biosynthesis of purines, thymidylate, methionine, and other important biomolecules. Also exhibits THF-independent aldolase activity toward beta-hydroxyamino acids, producing glycine and aldehydes, via a retro-aldol mechanism. The protein is Serine hydroxymethyltransferase of Microcystis aeruginosa (strain NIES-843 / IAM M-2473).